A 279-amino-acid chain; its full sequence is Acyl-[acyl-carrier-protein]--UDP-N-acetylglucosamine O-acyltransferase (279 aa).

Belongs to the transferase hexapeptide repeat family. LpxA subfamily. Homotrimer.

It is found in the cytoplasm. It catalyses the reaction a (3R)-hydroxyacyl-[ACP] + UDP-N-acetyl-alpha-D-glucosamine = a UDP-3-O-[(3R)-3-hydroxyacyl]-N-acetyl-alpha-D-glucosamine + holo-[ACP]. It functions in the pathway glycolipid biosynthesis; lipid IV(A) biosynthesis; lipid IV(A) from (3R)-3-hydroxytetradecanoyl-[acyl-carrier-protein] and UDP-N-acetyl-alpha-D-glucosamine: step 1/6. In terms of biological role, involved in the biosynthesis of lipid A, a phosphorylated glycolipid that anchors the lipopolysaccharide to the outer membrane of the cell. The polypeptide is Acyl-[acyl-carrier-protein]--UDP-N-acetylglucosamine O-acyltransferase (Mesorhizobium japonicum (strain LMG 29417 / CECT 9101 / MAFF 303099) (Mesorhizobium loti (strain MAFF 303099))).